The following is a 345-amino-acid chain: Dihydroorotase (345 aa).

Zn(2+) contacts are provided by histidine 13 and histidine 15. Residues histidine 15 to arginine 17 and asparagine 41 contribute to the substrate site. Zn(2+)-binding residues include lysine 98, histidine 135, and histidine 173. N6-carboxylysine is present on lysine 98. Histidine 135 contacts substrate. Leucine 218 serves as a coordination point for substrate. Aspartate 246 provides a ligand contact to Zn(2+). Residue aspartate 246 is part of the active site. Residues histidine 250 and alanine 262 each coordinate substrate.

This sequence belongs to the metallo-dependent hydrolases superfamily. DHOase family. Class II DHOase subfamily. In terms of assembly, homodimer. It depends on Zn(2+) as a cofactor.

The enzyme catalyses (S)-dihydroorotate + H2O = N-carbamoyl-L-aspartate + H(+). The protein operates within pyrimidine metabolism; UMP biosynthesis via de novo pathway; (S)-dihydroorotate from bicarbonate: step 3/3. In terms of biological role, catalyzes the reversible cyclization of carbamoyl aspartate to dihydroorotate. This chain is Dihydroorotase, found in Shewanella pealeana (strain ATCC 700345 / ANG-SQ1).